The following is a 90-amino-acid chain: ATP-dependent Clp protease adapter protein ClpS (90 aa).

This sequence belongs to the ClpS family. In terms of assembly, binds to the N-terminal domain of the chaperone ClpA.

In terms of biological role, involved in the modulation of the specificity of the ClpAP-mediated ATP-dependent protein degradation. This chain is ATP-dependent Clp protease adapter protein ClpS, found in Helicobacter pylori (strain J99 / ATCC 700824) (Campylobacter pylori J99).